The chain runs to 243 residues: UPF0246 protein SpyM3_1790 (243 aa).

This sequence belongs to the UPF0246 family.

In Streptococcus pyogenes serotype M3 (strain ATCC BAA-595 / MGAS315), this protein is UPF0246 protein SpyM3_1790.